The sequence spans 284 residues: Bifunctional protein FolD (284 aa).

Residues 164–166 (GRS) and Ser189 contribute to the NADP(+) site.

Belongs to the tetrahydrofolate dehydrogenase/cyclohydrolase family. In terms of assembly, homodimer.

It carries out the reaction (6R)-5,10-methylene-5,6,7,8-tetrahydrofolate + NADP(+) = (6R)-5,10-methenyltetrahydrofolate + NADPH. The enzyme catalyses (6R)-5,10-methenyltetrahydrofolate + H2O = (6R)-10-formyltetrahydrofolate + H(+). Its pathway is one-carbon metabolism; tetrahydrofolate interconversion. Catalyzes the oxidation of 5,10-methylenetetrahydrofolate to 5,10-methenyltetrahydrofolate and then the hydrolysis of 5,10-methenyltetrahydrofolate to 10-formyltetrahydrofolate. The polypeptide is Bifunctional protein FolD (Listeria monocytogenes serovar 1/2a (strain ATCC BAA-679 / EGD-e)).